The following is a 118-amino-acid chain: Small ribosomal subunit protein uS13 (118 aa).

A disordered region spans residues 94–118; sequence SLPLRGQRTKTNARTRKGPRKPIRK.

The protein belongs to the universal ribosomal protein uS13 family. As to quaternary structure, part of the 30S ribosomal subunit. Forms a loose heterodimer with protein S19. Forms two bridges to the 50S subunit in the 70S ribosome.

Its function is as follows. Located at the top of the head of the 30S subunit, it contacts several helices of the 16S rRNA. In the 70S ribosome it contacts the 23S rRNA (bridge B1a) and protein L5 of the 50S subunit (bridge B1b), connecting the 2 subunits; these bridges are implicated in subunit movement. Contacts the tRNAs in the A and P-sites. The protein is Small ribosomal subunit protein uS13 of Shewanella violacea (strain JCM 10179 / CIP 106290 / LMG 19151 / DSS12).